The sequence spans 695 residues: Elongation factor G (695 aa).

Residues 10-285 enclose the tr-type G domain; it reads DKTRNIGIMA…GVVDYLPSPL (276 aa). GTP contacts are provided by residues 19–26, 83–87, and 137–140; these read AHIDAGKT, DTPGH, and NKMD.

Belongs to the TRAFAC class translation factor GTPase superfamily. Classic translation factor GTPase family. EF-G/EF-2 subfamily.

The protein resides in the cytoplasm. Functionally, catalyzes the GTP-dependent ribosomal translocation step during translation elongation. During this step, the ribosome changes from the pre-translocational (PRE) to the post-translocational (POST) state as the newly formed A-site-bound peptidyl-tRNA and P-site-bound deacylated tRNA move to the P and E sites, respectively. Catalyzes the coordinated movement of the two tRNA molecules, the mRNA and conformational changes in the ribosome. In Latilactobacillus sakei subsp. sakei (strain 23K) (Lactobacillus sakei subsp. sakei), this protein is Elongation factor G.